A 245-amino-acid polypeptide reads, in one-letter code: DNA polymerase sliding clamp (245 aa).

Belongs to the PCNA family. Homotrimer. The subunits circularize to form a toroid; DNA passes through its center. Replication factor C (RFC) is required to load the toroid on the DNA.

Functionally, sliding clamp subunit that acts as a moving platform for DNA processing. Responsible for tethering the catalytic subunit of DNA polymerase and other proteins to DNA during high-speed replication. The polypeptide is DNA polymerase sliding clamp (Methanosarcina barkeri (strain Fusaro / DSM 804)).